Reading from the N-terminus, the 82-residue chain is UPF0729 protein C18orf32 homolog (82 aa).

The necessary for its localzation to the endoplasmic reticulum and lipid droplets stretch occupies residues 1-37; that stretch reads MVCIPCIVIPVLLWVYKKFLEPIVYPFISPIINRIWP. The disordered stretch occupies residues 46 to 82; the sequence is TSAKKEESNGTCKASGTSITNGSVSRGEEAVPDKKTD. Over residues 54 to 69 the composition is skewed to polar residues; it reads NGTCKASGTSITNGSV. Residues 71-82 show a composition bias toward basic and acidic residues; it reads RGEEAVPDKKTD.

The protein belongs to the UPF0729 family.

The protein resides in the endoplasmic reticulum. Its subcellular location is the lipid droplet. This is UPF0729 protein C18orf32 homolog from Xenopus tropicalis (Western clawed frog).